The primary structure comprises 80 residues: Metallothionein-like protein type 2 (80 aa).

This sequence belongs to the metallothionein superfamily. Type 15 family.

In terms of biological role, metallothioneins have a high content of cysteine residues that bind various heavy metals. The polypeptide is Metallothionein-like protein type 2 (Brassica campestris (Field mustard)).